The sequence spans 246 residues: Exosome complex component Rrp41 (246 aa).

Belongs to the RNase PH family. Rrp41 subfamily. Component of the archaeal exosome complex. Forms a hexameric ring-like arrangement composed of 3 Rrp41-Rrp42 heterodimers. The hexameric ring associates with a trimer of Rrp4 and/or Csl4 subunits.

The protein resides in the cytoplasm. In terms of biological role, catalytic component of the exosome, which is a complex involved in RNA degradation. Has 3'-&gt;5' exoribonuclease activity. Can also synthesize heteromeric RNA-tails. This Pyrobaculum aerophilum (strain ATCC 51768 / DSM 7523 / JCM 9630 / CIP 104966 / NBRC 100827 / IM2) protein is Exosome complex component Rrp41.